A 160-amino-acid polypeptide reads, in one-letter code: SsrA-binding protein (160 aa).

Belongs to the SmpB family.

The protein localises to the cytoplasm. Required for rescue of stalled ribosomes mediated by trans-translation. Binds to transfer-messenger RNA (tmRNA), required for stable association of tmRNA with ribosomes. tmRNA and SmpB together mimic tRNA shape, replacing the anticodon stem-loop with SmpB. tmRNA is encoded by the ssrA gene; the 2 termini fold to resemble tRNA(Ala) and it encodes a 'tag peptide', a short internal open reading frame. During trans-translation Ala-aminoacylated tmRNA acts like a tRNA, entering the A-site of stalled ribosomes, displacing the stalled mRNA. The ribosome then switches to translate the ORF on the tmRNA; the nascent peptide is terminated with the 'tag peptide' encoded by the tmRNA and targeted for degradation. The ribosome is freed to recommence translation, which seems to be the essential function of trans-translation. This chain is SsrA-binding protein, found in Klebsiella pneumoniae (strain 342).